The following is a 534-amino-acid chain: CTP synthase (534 aa).

The interval 1–267 is amidoligase domain; sequence MTKYIFVTGG…DQIVCDHLKL (267 aa). Serine 13 is a CTP binding site. A UTP-binding site is contributed by serine 13. 14–19 serves as a coordination point for ATP; that stretch reads SIGKGI. Tyrosine 54 is an L-glutamine binding site. Aspartate 71 lines the ATP pocket. 2 residues coordinate Mg(2+): aspartate 71 and glutamate 141. Residues 148 to 150, 188 to 193, and lysine 224 each bind CTP; these read DIE and KTKPTQ. UTP-binding positions include 188 to 193 and lysine 224; that span reads KTKPTQ. 240–242 provides a ligand contact to ATP; the sequence is RDV. In terms of domain architecture, Glutamine amidotransferase type-1 spans 292-534; the sequence is KIALVGKYVE…FVTAAIKNSN (243 aa). Position 354 (glycine 354) interacts with L-glutamine. Cysteine 381 (nucleophile; for glutamine hydrolysis) is an active-site residue. L-glutamine is bound by residues 382 to 385, glutamate 405, and arginine 463; that span reads LGMQ. Residues histidine 508 and glutamate 510 contribute to the active site.

This sequence belongs to the CTP synthase family. Homotetramer.

It catalyses the reaction UTP + L-glutamine + ATP + H2O = CTP + L-glutamate + ADP + phosphate + 2 H(+). The catalysed reaction is L-glutamine + H2O = L-glutamate + NH4(+). The enzyme catalyses UTP + NH4(+) + ATP = CTP + ADP + phosphate + 2 H(+). Its pathway is pyrimidine metabolism; CTP biosynthesis via de novo pathway; CTP from UDP: step 2/2. Its activity is regulated as follows. Allosterically activated by GTP, when glutamine is the substrate; GTP has no effect on the reaction when ammonia is the substrate. The allosteric effector GTP functions by stabilizing the protein conformation that binds the tetrahedral intermediate(s) formed during glutamine hydrolysis. Inhibited by the product CTP, via allosteric rather than competitive inhibition. In terms of biological role, catalyzes the ATP-dependent amination of UTP to CTP with either L-glutamine or ammonia as the source of nitrogen. Regulates intracellular CTP levels through interactions with the four ribonucleotide triphosphates. The polypeptide is CTP synthase (Streptococcus pyogenes serotype M18 (strain MGAS8232)).